Here is a 528-residue protein sequence, read N- to C-terminus: CTD kinase subunit alpha (528 aa).

The segment covering 1–15 (MSYNNGNTYSKSYSR) has biased composition (polar residues). The segment at 1 to 148 (MSYNNGNTYS…NTSNDIKNGY (148 aa)) is disordered. S14 carries the post-translational modification Phosphoserine; by autocatalysis. The Nuclear localization signal signature appears at 37–44 (PPKRIRTD). Residues 45 to 103 (SGYQSNMDNISSHRVNSNDQPGHTKSRGNNNLSRYNDTSFQTSSRYQGSRYNNNNTSYE) show a composition bias toward polar residues. The segment covering 104–118 (NRPKSIKRDETKAEF) has biased composition (basic and acidic residues). The segment covering 134–144 (YNNSSNTSNDI) has biased composition (polar residues). A Protein kinase domain is found at 183–469 (YLRIMQVGEG…ATEALQSDYF (287 aa)). Residues 189–197 (VGEGTYGKV) and K212 contribute to the ATP site. D306 functions as the Proton acceptor in the catalytic mechanism. T338 carries the phosphothreonine modification. Positions 497-528 (QKRPNILSTNTNNKGNGNSNNNNNNNNDDDDK) are disordered. Residues 504–522 (STNTNNKGNGNSNNNNNNN) are compositionally biased toward low complexity.

The protein belongs to the protein kinase superfamily. CMGC Ser/Thr protein kinase family. CDC2/CDKX subfamily. CTDK-I consists of three subunits, CTK1, CTK2 and CTK3 (also called alpha, beta and gamma). Interacts directly with the CTK2 and CTK3 subunits, this interaction is required for kinase activity. Interacts with RNA polymerase I. Interacts with SNF1, but only at low glucose concentrations. Interacts with translating ribosomes. In terms of processing, phosphorylated on Thr-338 by CAK1. Phosphorylation is essential for the elevated CTD Ser-2 phosphorylation and required to activate transcription of stationary-phase genes during the diauxic shift.

The protein localises to the nucleus. The protein resides in the nucleolus. Its subcellular location is the cytoplasm. It carries out the reaction [DNA-directed RNA polymerase] + ATP = phospho-[DNA-directed RNA polymerase] + ADP + H(+). In terms of biological role, catalytic subunit of the CTDK-I complex, which hyperphosphorylates the C-terminal heptapeptide repeat domain (CTD) of the largest RNA polymerase II subunit. CTDK-I phosphorylates 'Ser-5' if the CTD substrate is not phosphorylated at 'Ser-5', but will phosphorylate 'Ser-2' of a CTD substrate if 'Ser-5' is already phosphorylated. CTDK-I is also more reactive toward substrates that are prephosphorylated at 'Ser-2' or 'Ser-5' compared with an unphosphorylated CTD substrate, therefore efficiently creating doubly phosphorylated CTD repeats. Involved in RNA polymerase II transcriptional elongation, and through PTI1, pre-mRNA 3'-end processing. Participates in both positive and negative regulation of CTD phosphorylation. Required for DNA damage induced transcription, including the expression of the RNR genes, and reprogramming of gene expression upon amino acid starvation. Required for SET2 mediated H3K36 methylation. Also regulates H3K4 methylation. Controls the maintenance of suppressive chromatin in the coding regions of genes by both promoting H3K36 methylation, which leads to histone deacetylation, and catalyzing phosphorylation of the CTD required to localize H3K4 chromatin modification specifically to the 5' ends of genes, thereby creating a boundary for H3K4 methylation that prevents a mark associated with transcriptional initiation from spreading into the bodies of genes. Involved in RNA polymerase I transcription. Involved in telomere maintenance. Acts together with SNF1 to induce GSY2 transcription in response to glucose limitation. Involved in the adaptation to alternative carbon sources, including galactose, glycerol and ethanol, but not raffinose. Required for the integrity of the rDNA locus. Functions in translation elongation by enhancing decoding fidelity. Needed for translational accuracy by phosphorylating RPS2. This is CTD kinase subunit alpha (CTK1) from Saccharomyces cerevisiae (strain ATCC 204508 / S288c) (Baker's yeast).